The sequence spans 709 residues: Polyribonucleotide nucleotidyltransferase (709 aa).

2 residues coordinate Mg(2+): aspartate 482 and aspartate 488. The region spanning proline 549 to isoleucine 608 is the KH domain. Positions glycine 618 to lysine 686 constitute an S1 motif domain.

It belongs to the polyribonucleotide nucleotidyltransferase family. Mg(2+) is required as a cofactor.

It localises to the cytoplasm. It carries out the reaction RNA(n+1) + phosphate = RNA(n) + a ribonucleoside 5'-diphosphate. Functionally, involved in mRNA degradation. Catalyzes the phosphorolysis of single-stranded polyribonucleotides processively in the 3'- to 5'-direction. The protein is Polyribonucleotide nucleotidyltransferase of Heliobacterium modesticaldum (strain ATCC 51547 / Ice1).